The sequence spans 509 residues: Maturase K (509 aa).

Belongs to the intron maturase 2 family. MatK subfamily.

The protein localises to the plastid. The protein resides in the chloroplast. In terms of biological role, usually encoded in the trnK tRNA gene intron. Probably assists in splicing its own and other chloroplast group II introns. This chain is Maturase K, found in Nicotiana glauca (Glaucous tobacco).